We begin with the raw amino-acid sequence, 563 residues long: Rab escort protein 1 (563 aa).

Residues 538-563 (ELFKEETSPAENTTEEENDGGVEIED) are disordered. The span at 550–563 (TTEEENDGGVEIED) shows a compositional bias: acidic residues.

Belongs to the Rab GDI family. In terms of assembly, heterotrimer composed of the alpha subunit RGTA, the beta subunit RGTB and REP; within this trimer, RGTA and RGTB form the catalytic component, while REP mediates peptide substrate binding. In terms of tissue distribution, expressed in roots, leaves and flowers.

The protein localises to the cytoplasm. Its function is as follows. Substrate-binding subunit of the Rab geranylgeranyltransferase (GGTase) complex. Binds unprenylated Rab proteins and presents the substrate peptide to the catalytic component composed of the alpha subunit RGTA and the beta subunit RGTB. Preferentially binds the GDP-bound form of Rab and stimulates geranylgeranylation of various Rab GTPases in vitro. The sequence is that of Rab escort protein 1 from Arabidopsis thaliana (Mouse-ear cress).